The sequence spans 101 residues: Small ribosomal subunit protein uS14 (101 aa).

The protein belongs to the universal ribosomal protein uS14 family. In terms of assembly, part of the 30S ribosomal subunit. Contacts proteins S3 and S10.

Its function is as follows. Binds 16S rRNA, required for the assembly of 30S particles and may also be responsible for determining the conformation of the 16S rRNA at the A site. This is Small ribosomal subunit protein uS14 from Pseudomonas putida (strain GB-1).